The sequence spans 588 residues: Adenine deaminase (588 aa).

The protein belongs to the metallo-dependent hydrolases superfamily. Adenine deaminase family. As to quaternary structure, homodimer. Mn(2+) serves as cofactor.

It carries out the reaction adenine + H2O + H(+) = hypoxanthine + NH4(+). In Escherichia coli O81 (strain ED1a), this protein is Adenine deaminase.